A 35-amino-acid polypeptide reads, in one-letter code: Sperm protamine alpha isoform 1 (35 aa).

The tract at residues 1–35 (MPRRRRRASRPVRRRRRARRSTAVRRRRRVVRRRR) is disordered. Residues S9 and S21 each carry the phosphoserine modification.

In terms of processing, phosphorylated in immature sperm. Dephosphorylated in mature sperm allowing a stronger interaction with DNA. Gonads.

Its subcellular location is the nucleus. The protein resides in the chromosome. Protamines substitute for histones in the chromatin of sperm during the haploid phase of spermatogenesis. They compact sperm DNA into a highly condensed, stable and inactive complex. The sequence is that of Sperm protamine alpha isoform 1 from Scomber scombrus (Atlantic mackerel).